The sequence spans 562 residues: Ribonuclease Y (562 aa).

Residues 1-21 (MNMLYFVLALLVGLAGGFFVG) form a helical membrane-spanning segment. A disordered region spans residues 108–129 (AAQDAARERETLSADRQETRRE). Residues 252–312 (SVSVVPIPND…VRREVARHVL (61 aa)) enclose the KH domain. The 94-residue stretch at 378-471 (VLKHSVQVAH…VAAADAISAA (94 aa)) folds into the HD domain.

This sequence belongs to the RNase Y family.

It is found in the cell membrane. Its function is as follows. Endoribonuclease that initiates mRNA decay. The sequence is that of Ribonuclease Y from Deinococcus geothermalis (strain DSM 11300 / CIP 105573 / AG-3a).